Consider the following 1108-residue polypeptide: Mediator of RNA polymerase II transcription subunit 14 (1108 aa).

Disordered regions lie at residues 1 to 30 (MAAV…GGDT), 35 to 54 (SSEI…DNPL), and 1048 to 1108 (QQQR…VDLT). The segment covering 35-52 (SSEIVQQQTPARSLQSDN) has biased composition (polar residues). The span at 1048–1080 (QQQRQPVVQPGQQPQVQNQANGVMNRGPQRPGL) shows a compositional bias: low complexity.

It belongs to the Mediator complex subunit 14 family. Component of the Mediator complex.

The protein localises to the nucleus. Component of the Mediator complex, a coactivator involved in the regulated transcription of nearly all RNA polymerase II-dependent genes. Mediator functions as a bridge to convey information from gene-specific regulatory proteins to the basal RNA polymerase II transcription machinery. Mediator is recruited to promoters by direct interactions with regulatory proteins and serves as a scaffold for the assembly of a functional preinitiation complex with RNA polymerase II and the general transcription factors. The polypeptide is Mediator of RNA polymerase II transcription subunit 14 (RGR1) (Pyricularia oryzae (strain 70-15 / ATCC MYA-4617 / FGSC 8958) (Rice blast fungus)).